The primary structure comprises 1091 residues: ATP-dependent helicase/deoxyribonuclease subunit B (1091 aa).

This sequence belongs to the helicase family. AddB/RexB type 2 subfamily. Heterodimer of AddA and RexB. Mg(2+) serves as cofactor.

The heterodimer acts as both an ATP-dependent DNA helicase and an ATP-dependent, dual-direction single-stranded exonuclease. Recognizes the chi site generating a DNA molecule suitable for the initiation of homologous recombination. This subunit has 5' -&gt; 3' nuclease activity but not helicase activity. The protein is ATP-dependent helicase/deoxyribonuclease subunit B of Streptococcus pneumoniae (strain CGSP14).